We begin with the raw amino-acid sequence, 266 residues long: Undecaprenyl-diphosphatase (266 aa).

Helical transmembrane passes span 39-59 (PGSS…VWYF), 86-106 (SIFI…LFVP), 112-132 (VLRS…FMYL), 153-173 (LIGF…GITI), 189-209 (FSFL…FIFS), 216-236 (IGFL…LLAI), and 246-266 (NGLK…LLNL).

The protein belongs to the UppP family.

The protein localises to the cell inner membrane. The enzyme catalyses di-trans,octa-cis-undecaprenyl diphosphate + H2O = di-trans,octa-cis-undecaprenyl phosphate + phosphate + H(+). Catalyzes the dephosphorylation of undecaprenyl diphosphate (UPP). Confers resistance to bacitracin. The chain is Undecaprenyl-diphosphatase from Prochlorococcus marinus (strain MIT 9215).